Reading from the N-terminus, the 229-residue chain is Biosynthetic peptidoglycan transglycosylase (229 aa).

Residues 11 to 31 form a helical membrane-spanning segment; the sequence is NLLLALFLVLVAGPVVAVILY.

This sequence belongs to the glycosyltransferase 51 family.

The protein resides in the cell inner membrane. It catalyses the reaction [GlcNAc-(1-&gt;4)-Mur2Ac(oyl-L-Ala-gamma-D-Glu-L-Lys-D-Ala-D-Ala)](n)-di-trans,octa-cis-undecaprenyl diphosphate + beta-D-GlcNAc-(1-&gt;4)-Mur2Ac(oyl-L-Ala-gamma-D-Glu-L-Lys-D-Ala-D-Ala)-di-trans,octa-cis-undecaprenyl diphosphate = [GlcNAc-(1-&gt;4)-Mur2Ac(oyl-L-Ala-gamma-D-Glu-L-Lys-D-Ala-D-Ala)](n+1)-di-trans,octa-cis-undecaprenyl diphosphate + di-trans,octa-cis-undecaprenyl diphosphate + H(+). The protein operates within cell wall biogenesis; peptidoglycan biosynthesis. Its function is as follows. Peptidoglycan polymerase that catalyzes glycan chain elongation from lipid-linked precursors. This chain is Biosynthetic peptidoglycan transglycosylase, found in Caulobacter vibrioides (strain ATCC 19089 / CIP 103742 / CB 15) (Caulobacter crescentus).